The primary structure comprises 594 residues: Adenine deaminase 1 (594 aa).

This sequence belongs to the metallo-dependent hydrolases superfamily. Adenine deaminase family. Requires Mn(2+) as cofactor.

It catalyses the reaction adenine + H2O + H(+) = hypoxanthine + NH4(+). The protein is Adenine deaminase 1 of Latilactobacillus sakei subsp. sakei (strain 23K) (Lactobacillus sakei subsp. sakei).